A 59-amino-acid polypeptide reads, in one-letter code: Conotoxin Ts-03 (59 aa).

The signal sequence occupies residues 1–19 (MRCLPVFIILLLLIPSAAS). Residues 20–47 (VAQPKTKDDVALASFYDNAKRTLQRHWA) constitute a propeptide that is removed on maturation.

It belongs to the conotoxin T superfamily. Post-translationally, contains 2 disulfide bonds that can be either 'C1-C3, C2-C4' or 'C1-C4, C2-C3', since these disulfide connectivities have been observed for conotoxins with cysteine framework V (for examples, see AC P0DQQ7 and AC P81755). As to expression, expressed by the venom duct.

It localises to the secreted. This Conus tessulatus (Tessellate cone) protein is Conotoxin Ts-03.